The sequence spans 93 residues: MRTVPLFAACLLLTLMAQAEPLPRAADHSDTKMKGDREDHVAVISFWEEESTSLQDAGAGAGRRCICTTRTCRFPYRRLGTCLFQNRVYTFCC.

The N-terminal stretch at 1 to 19 (MRTVPLFAACLLLTLMAQA) is a signal peptide. A propeptide spanning residues 20–62 (EPLPRAADHSDTKMKGDREDHVAVISFWEEESTSLQDAGAGAG) is cleaved from the precursor. 3 disulfides stabilise this stretch: Cys-65-Cys-93, Cys-67-Cys-82, and Cys-72-Cys-92.

It belongs to the alpha-defensin family.

The protein resides in the secreted. Has antibiotic, anti-fungi and antiviral activity. This Cavia porcellus (Guinea pig) protein is Neutrophil cationic peptide 2.